The following is a 363-amino-acid chain: UDP-N-acetylglucosamine--N-acetylmuramyl-(pentapeptide) pyrophosphoryl-undecaprenol N-acetylglucosamine transferase (363 aa).

UDP-N-acetyl-alpha-D-glucosamine contacts are provided by residues 12–14 (TGG), Asn122, Arg164, Ser191, Ile245, and Gln290.

Belongs to the glycosyltransferase 28 family. MurG subfamily.

It localises to the cell membrane. The catalysed reaction is di-trans,octa-cis-undecaprenyl diphospho-N-acetyl-alpha-D-muramoyl-L-alanyl-D-glutamyl-meso-2,6-diaminopimeloyl-D-alanyl-D-alanine + UDP-N-acetyl-alpha-D-glucosamine = di-trans,octa-cis-undecaprenyl diphospho-[N-acetyl-alpha-D-glucosaminyl-(1-&gt;4)]-N-acetyl-alpha-D-muramoyl-L-alanyl-D-glutamyl-meso-2,6-diaminopimeloyl-D-alanyl-D-alanine + UDP + H(+). It participates in cell wall biogenesis; peptidoglycan biosynthesis. Its function is as follows. Cell wall formation. Catalyzes the transfer of a GlcNAc subunit on undecaprenyl-pyrophosphoryl-MurNAc-pentapeptide (lipid intermediate I) to form undecaprenyl-pyrophosphoryl-MurNAc-(pentapeptide)GlcNAc (lipid intermediate II). This is UDP-N-acetylglucosamine--N-acetylmuramyl-(pentapeptide) pyrophosphoryl-undecaprenol N-acetylglucosamine transferase from Lawsonia intracellularis (strain PHE/MN1-00).